We begin with the raw amino-acid sequence, 285 residues long: Protease HtpX homolog (285 aa).

The next 2 helical transmembrane spans lie at threonine 7 to glycine 27 and glycine 30 to aspartate 50. Histidine 131 is a binding site for Zn(2+). The active site involves glutamate 132. Histidine 135 contributes to the Zn(2+) binding site. 2 consecutive transmembrane segments (helical) span residues isoleucine 146–glycine 166 and isoleucine 177–isoleucine 197. Residue glutamate 202 coordinates Zn(2+).

This sequence belongs to the peptidase M48B family. Zn(2+) serves as cofactor.

The protein localises to the cell inner membrane. In Burkholderia ambifaria (strain MC40-6), this protein is Protease HtpX homolog.